Here is a 513-residue protein sequence, read N- to C-terminus: ATP synthase subunit alpha (513 aa).

An ATP-binding site is contributed by 169 to 176 (GDRQTGKT).

It belongs to the ATPase alpha/beta chains family. F-type ATPases have 2 components, CF(1) - the catalytic core - and CF(0) - the membrane proton channel. CF(1) has five subunits: alpha(3), beta(3), gamma(1), delta(1), epsilon(1). CF(0) has three main subunits: a(1), b(2) and c(9-12). The alpha and beta chains form an alternating ring which encloses part of the gamma chain. CF(1) is attached to CF(0) by a central stalk formed by the gamma and epsilon chains, while a peripheral stalk is formed by the delta and b chains.

The protein localises to the cell inner membrane. It carries out the reaction ATP + H2O + 4 H(+)(in) = ADP + phosphate + 5 H(+)(out). Its function is as follows. Produces ATP from ADP in the presence of a proton gradient across the membrane. The alpha chain is a regulatory subunit. This chain is ATP synthase subunit alpha, found in Mannheimia succiniciproducens (strain KCTC 0769BP / MBEL55E).